The chain runs to 187 residues: UPF0301 protein YqgE (187 aa).

Belongs to the UPF0301 (AlgH) family.

The polypeptide is UPF0301 protein YqgE (Salmonella choleraesuis (strain SC-B67)).